The chain runs to 60 residues: UPF0434 protein mma_2578 (60 aa).

This sequence belongs to the UPF0434 family.

In Janthinobacterium sp. (strain Marseille) (Minibacterium massiliensis), this protein is UPF0434 protein mma_2578.